Reading from the N-terminus, the 95-residue chain is Cell division topological specificity factor (95 aa).

Belongs to the MinE family.

Functionally, prevents the cell division inhibition by proteins MinC and MinD at internal division sites while permitting inhibition at polar sites. This ensures cell division at the proper site by restricting the formation of a division septum at the midpoint of the long axis of the cell. In Trichodesmium erythraeum (strain IMS101), this protein is Cell division topological specificity factor.